The sequence spans 212 residues: Ribonuclease HII (212 aa).

The RNase H type-2 domain maps to 20–209 (TCVVGVDEVG…VHNILYQEAS (190 aa)). The a divalent metal cation site is built by Asp-26, Glu-27, and Asp-117.

This sequence belongs to the RNase HII family. The cofactor is Mn(2+). It depends on Mg(2+) as a cofactor.

It localises to the cytoplasm. The enzyme catalyses Endonucleolytic cleavage to 5'-phosphomonoester.. Its function is as follows. Endonuclease that specifically degrades the RNA of RNA-DNA hybrids. This is Ribonuclease HII from Cereibacter sphaeroides (strain ATCC 17023 / DSM 158 / JCM 6121 / CCUG 31486 / LMG 2827 / NBRC 12203 / NCIMB 8253 / ATH 2.4.1.) (Rhodobacter sphaeroides).